We begin with the raw amino-acid sequence, 263 residues long: Lens fiber major intrinsic protein (263 aa).

Residues 1 to 9 lie on the Cytoplasmic side of the membrane; it reads MWELRSASF. The chain crosses the membrane as a helical span at residues 10–29; sequence WRAIFAEFFATLFYVFFGLG. Residues 30–41 are Extracellular-facing; that stretch reads SSLRWAPGPLHV. A helical transmembrane segment spans residues 42 to 59; it reads LQVAMAFGLALATLVQSV. Residues 60 to 61 are Cytoplasmic-facing; sequence GH. The segment at residues 62–77 is an intramembrane region (discontinuously helical); the sequence is ISGAHVNPAVTFAFLV. The NPA 1 motif lies at 68–70; it reads NPA. The Cytoplasmic portion of the chain corresponds to 78–82; the sequence is GSQMS. Residues 83 to 106 traverse the membrane as a helical segment; sequence LLRAFCYMAAQLLGAVAGAAVLYS. Over 107-127 the chain is Extracellular; sequence VTPPAVRGNLALNTLHPAVSV. Residues 128 to 148 traverse the membrane as a helical segment; the sequence is GQATTVEIFLTLQFVLCIFAT. The Cytoplasmic segment spans residues 149 to 156; that stretch reads YDERRNGQ. A helical transmembrane segment spans residues 157–175; that stretch reads LGSVALAVGFSLALGHLFG. The Extracellular portion of the chain corresponds to 176 to 178; it reads MYY. The segment at residues 179–193 is an intramembrane region (discontinuously helical); it reads TGAGMNPARSFAPAI. The NPA 2 signature appears at 184–186; that stretch reads NPA. Residues 194 to 200 lie on the Extracellular side of the membrane; the sequence is LTGNFTN. Residues 201–222 traverse the membrane as a helical segment; the sequence is HWVYWVGPIIGGGLGSLLYDFL. The Cytoplasmic segment spans residues 223-263; it reads LFPRLKSISERLSVLKGAKPDVSNGQPEVTGEPVELNTQAL. The segment at 227 to 237 is interaction with CALM; the sequence is LKSISERLSVL. Serine 235 and serine 245 each carry phosphoserine. A deamidated asparagine; by deterioration mark is found at asparagine 246 and asparagine 259.

It belongs to the MIP/aquaporin (TC 1.A.8) family. Homotetramer; each monomer provides an independent water pore. Two homotetramers on opposing membranes can dimerize, forming a cell-cell junction. Interacts with CALM; the calcium-calmodulin/CALM complex interacts with the cytoplasmic domains of two aquaporins, leading to channel closure. Interacts with BFSP1 (via C-terminus); prevents calcium-dependent inhibition of the water channel activity. Post-translationally, subject to partial proteolytic cleavage in the eye lens core. Partial proteolysis promotes interactions between tetramers from adjoining membranes. In terms of processing, fatty acylated at Met-1 and Lys-238. The acyl modifications, in decreasing order of ion abundance, are: oleoyl (C18:1) &gt; palmitoyl (C16:0) &gt; stearoyl (C18:0) &gt; eicosenoyl (C20:1) &gt; dihomo-gamma-linolenoyl (C20:3) &gt; palmitoleoyl (C16:1) &gt; eicosadienoyl (C20:2). Expressed in the cortex and nucleus of the retina lens (at protein level). Major component of lens fiber gap junctions.

Its subcellular location is the cell membrane. It is found in the cell junction. It catalyses the reaction H2O(in) = H2O(out). The water channel activity is inhibited by calcium through calmodulin/CALM. In terms of biological role, aquaporins form homotetrameric transmembrane channels, with each monomer independently mediating water transport across the plasma membrane along its osmotic gradient. Specifically expressed in lens fiber cells, this aquaporin is crucial for maintaining lens water homeostasis and transparency. Beyond water permeability, it also acts as a cell-to-cell adhesion molecule, forming thin junctions between lens fiber cells that are essential for maintaining the ordered structure and transparency of the lens. In Homo sapiens (Human), this protein is Lens fiber major intrinsic protein.